The primary structure comprises 702 residues: Dynein axonemal intermediate chain 1 (702 aa).

Residues 1-58 (MLPASSKMPHKQPPPPRKQSISMGRGARKRDEDSGTEVGEGTDEWVQSKATVKPPDQL) form a disordered region. Residues serine 134 and serine 137 each carry the phosphoserine modification. WD repeat units follow at residues 383-423 (SSES…SQPS), 432-475 (KHTD…LVHT), 540-580 (AHNM…PMFI), 582-622 (DLNS…YEAI), and 630-669 (KKKN…RKMP).

The protein belongs to the dynein intermediate chain family. As to quaternary structure, consists of at least two heavy chains and a number of intermediate and light chains. Interacts with BICD2. Interacts with CFAP45 and CFAP52. Interacts with CFAP53.

It localises to the cytoplasm. Its subcellular location is the cytoskeleton. The protein resides in the cilium axoneme. In terms of biological role, part of the dynein complex of respiratory cilia. The sequence is that of Dynein axonemal intermediate chain 1 (DNAI1) from Bos taurus (Bovine).